The primary structure comprises 299 residues: Protoheme IX farnesyltransferase (299 aa).

8 helical membrane passes run 25-45 (IVSLIVFTAIVGMFLSVPDLA), 51-71 (LFGTLGIGLGAASAAAINHLI), 97-117 (ALAFAITLGLSSMIILYFLVN), 119-139 (LTAWLTLASMIGYGIIYTAFL), 147-167 (IVLGGASGAMPPVLGWAAVTG), 173-193 (AFLLFLIIFVWTPPHFWALAL), 225-245 (FLLFAVSLLPFVSHMSGLLYL), and 275-295 (FGYSIVYLAALFAFLLVDHYL).

The protein belongs to the UbiA prenyltransferase family. Protoheme IX farnesyltransferase subfamily.

The protein resides in the cell inner membrane. It catalyses the reaction heme b + (2E,6E)-farnesyl diphosphate + H2O = Fe(II)-heme o + diphosphate. The protein operates within porphyrin-containing compound metabolism; heme O biosynthesis; heme O from protoheme: step 1/1. In terms of biological role, converts heme B (protoheme IX) to heme O by substitution of the vinyl group on carbon 2 of heme B porphyrin ring with a hydroxyethyl farnesyl side group. This is Protoheme IX farnesyltransferase from Nitrosococcus oceani (strain ATCC 19707 / BCRC 17464 / JCM 30415 / NCIMB 11848 / C-107).